Consider the following 334-residue polypeptide: 4-hydroxy-2-methyl-3-oxo-4-farnesyl-3,4-dihydroquinoline-1-oxide ketoreductase (334 aa).

The active-site Proton donor is the Y139.

This sequence belongs to the 3-beta-HSD family.

It catalyses the reaction aurachin B + NAD(+) + H2O = 4-hydroxy-2-methyl-3-oxo-4-[(2E,6E)-farnesyl]-3,4-dihydroquinoline 1-oxide + NADH. It carries out the reaction 3,4-dihydroxy-2-methyl-4-[(2E,6E)-farnesyl]-3,4-dihydroquinoline 1-oxide + NAD(+) = 4-hydroxy-2-methyl-3-oxo-4-[(2E,6E)-farnesyl]-3,4-dihydroquinoline 1-oxide + NADH + H(+). Its function is as follows. Ketoreductase that catalyzes the final step in the conversion of aurachin C to aurachin B. Catalyzes the reduction of 4-hydroxy-2-methyl-3-oxo-4-[(2E,6E)-farnesyl]-3,4-dihydroquinoline-1-oxide to form 3,4-dihydroxy-2-methyl-4-[(2E,6E)-farnesyl]-3,4-dihydroquinoline 1-oxide, which then undergoes a spontaneous dehydration to form aurachin B. Accepts both NADH and NADPH, but has a preference for NADH. This chain is 4-hydroxy-2-methyl-3-oxo-4-farnesyl-3,4-dihydroquinoline-1-oxide ketoreductase, found in Stigmatella aurantiaca.